The sequence spans 1443 residues: Lysophospholipase NTE1 (1443 aa).

Over 1 to 59 (MEEELAIEDLPRLTGTVSLNNGLLHSIYNETTVFKILRWSLVEIPKYILKLMSKNLEIN) the chain is Lumenal. Residues 60-80 (LNVSSILIITLLIAAGILVIV) form a helical membrane-spanning segment. Over 81–1443 (RYKFLTGYSE…RIKMYRRNTM (1363 aa)) the chain is Cytoplasmic. Over residues 103–118 (ALGQQSTNYPKSTSSG) the composition is skewed to polar residues. Disordered stretches follow at residues 103-122 (ALGQQSTNYPKSTSSGLFVE) and 199-251 (KYDE…GKMH). The span at 210–235 (EGEEADEDDEEEEKEVGDDGDDEMDV) shows a compositional bias: acidic residues. Residues 619 to 750 (LYKR…LKSL) and 746 to 871 (KLKS…VASK) each bind a nucleoside 3',5'-cyclic phosphate. One can recognise a PNPLA domain in the interval 1136–1300 (LVLGGGGSRG…LDNLPVMEMK (165 aa)). Residues 1140 to 1145 (GGGSRG) carry the GXGXXG motif. Positions 1167–1171 (GTSIG) match the GXSXG motif. Ser1169 serves as the catalytic Nucleophile. Asp1287 functions as the Proton acceptor in the catalytic mechanism. The DGA/G signature appears at 1287-1289 (DGG).

This sequence belongs to the NTE family.

It is found in the endoplasmic reticulum membrane. It carries out the reaction a 1-acyl-sn-glycero-3-phosphocholine + H2O = sn-glycerol 3-phosphocholine + a fatty acid + H(+). Its activity is regulated as follows. Inhibited by organophosphorus esters. In terms of biological role, intracellular phospholipase B that catalyzes the double deacylation of phosphatidylcholine (PC) to glycerophosphocholine (GroPCho). Plays an important role in membrane lipid homeostasis. Responsible for the rapid PC turnover in response to inositol, elevated temperatures, or when choline is present in the growth medium. The protein is Lysophospholipase NTE1 (NTE1) of Lodderomyces elongisporus (strain ATCC 11503 / CBS 2605 / JCM 1781 / NBRC 1676 / NRRL YB-4239) (Yeast).